A 62-amino-acid polypeptide reads, in one-letter code: Short neurotoxin 1 (62 aa).

Polar residues predominate over residues 1–16 (LECHNQQSIQTPTTTG). The interval 1–20 (LECHNQQSIQTPTTTGCSGG) is disordered. 4 cysteine pairs are disulfide-bonded: C3–C24, C17–C41, C43–C54, and C55–C60.

It belongs to the three-finger toxin family. Short-chain subfamily. Type I alpha-neurotoxin sub-subfamily. As to expression, expressed by the venom gland.

The protein resides in the secreted. Binds to muscle nicotinic acetylcholine receptor (nAChR) and inhibit acetylcholine from binding to the receptor, thereby impairing neuromuscular transmission. This is Short neurotoxin 1 from Naja kaouthia (Monocled cobra).